The sequence spans 169 residues: Shikimate kinase (169 aa).

13–18 (GAGKST) is a binding site for ATP. Ser-17 contacts Mg(2+). 3 residues coordinate substrate: Asp-35, Arg-59, and Gly-80. Arg-117 lines the ATP pocket. Position 136 (Arg-136) interacts with substrate. Arg-153 is a binding site for ATP.

The protein belongs to the shikimate kinase family. As to quaternary structure, monomer. Mg(2+) serves as cofactor.

The protein resides in the cytoplasm. It carries out the reaction shikimate + ATP = 3-phosphoshikimate + ADP + H(+). The protein operates within metabolic intermediate biosynthesis; chorismate biosynthesis; chorismate from D-erythrose 4-phosphate and phosphoenolpyruvate: step 5/7. Its function is as follows. Catalyzes the specific phosphorylation of the 3-hydroxyl group of shikimic acid using ATP as a cosubstrate. The sequence is that of Shikimate kinase from Corynebacterium efficiens (strain DSM 44549 / YS-314 / AJ 12310 / JCM 11189 / NBRC 100395).